The following is a 152-amino-acid chain: UPF0735 ACT domain-containing protein SAS1579 (152 aa).

The region spanning 75–150 (TLILYVTDIV…YVSKVELISM (76 aa)) is the ACT domain.

This sequence belongs to the UPF0735 family.

The protein is UPF0735 ACT domain-containing protein SAS1579 of Staphylococcus aureus (strain MSSA476).